Reading from the N-terminus, the 156-residue chain is 6,7-dimethyl-8-ribityllumazine synthase (156 aa).

Residues F23, 57–59 (SWE), and 81–83 (AVV) contribute to the 5-amino-6-(D-ribitylamino)uracil site. 86–87 (ET) contacts (2S)-2-hydroxy-3-oxobutyl phosphate. Residue H89 is the Proton donor of the active site. F114 serves as a coordination point for 5-amino-6-(D-ribitylamino)uracil. R128 is a (2S)-2-hydroxy-3-oxobutyl phosphate binding site.

The protein belongs to the DMRL synthase family.

The enzyme catalyses (2S)-2-hydroxy-3-oxobutyl phosphate + 5-amino-6-(D-ribitylamino)uracil = 6,7-dimethyl-8-(1-D-ribityl)lumazine + phosphate + 2 H2O + H(+). It functions in the pathway cofactor biosynthesis; riboflavin biosynthesis; riboflavin from 2-hydroxy-3-oxobutyl phosphate and 5-amino-6-(D-ribitylamino)uracil: step 1/2. Catalyzes the formation of 6,7-dimethyl-8-ribityllumazine by condensation of 5-amino-6-(D-ribitylamino)uracil with 3,4-dihydroxy-2-butanone 4-phosphate. This is the penultimate step in the biosynthesis of riboflavin. This Salinibacter ruber (strain DSM 13855 / M31) protein is 6,7-dimethyl-8-ribityllumazine synthase.